Consider the following 82-residue polypeptide: U1-plectoxin-Pt1a (82 aa).

The signal sequence occupies residues 1 to 20 (MKHLIFSSALVCALVVCTFA). Positions 21-33 (EEQVNVPFLPDER) are excised as a propeptide. Cystine bridges form between C37-C51, C44-C57, C50-C68, C54-C77, and C59-C66. S79 is lipidated: O-palmitoyl serine. Positions 80–82 (RRR) are excised as a propeptide.

The protein belongs to the neurotoxin 02 (plectoxin) family. 02 (plectoxin) subfamily. In terms of processing, plectoxin-5 presumably undergoes post-translational modification to give rise to plectoxin-6. Expressed by the venom gland.

It is found in the secreted. In terms of biological role, potent toxin that may paralyze and/or kill insect pests such as H.virescens (lepidoptera), S.exigua (beet armyworm) and M.sexta (tobacco hornworm). This is U1-plectoxin-Pt1a from Plectreurys tristis (Spider).